The following is a 175-amino-acid chain: Endothelin-2 (175 aa).

Positions 1-21 (MVSAWCSIALALLLALHEGKG) are cleaved as a signal peptide. Positions 22 to 43 (QAAATLEQPASAPKGRGPHLRF) are excised as a propeptide. 2 disulfide bridges follow: cysteine 46/cysteine 60 and cysteine 48/cysteine 56. The propeptide occupies 67–175 (VNTAGQTAPY…IPAYSRWRKR (109 aa)). The interval 93–108 (CECSTAGDSACATFCH) is endothelin-like.

This sequence belongs to the endothelin/sarafotoxin family.

The protein localises to the secreted. Vasoconstrictor. The protein is Endothelin-2 (Edn2) of Mus musculus (Mouse).